A 223-amino-acid chain; its full sequence is Protein DEHYDRATION-INDUCED 19 homolog 3 (223 aa).

Thr114 is subject to Phosphothreonine. Ser116 carries the phosphoserine modification.

Belongs to the Di19 family. In terms of processing, phosphorylated in vitro by CPK3 or CPK11. In terms of tissue distribution, expressed in seedlings, roots, leaves, stems, flowers and siliques.

It is found in the nucleus. This Arabidopsis thaliana (Mouse-ear cress) protein is Protein DEHYDRATION-INDUCED 19 homolog 3 (DI19-3).